The primary structure comprises 405 residues: Enoyl-[acyl-carrier-protein] reductase [NADH] (405 aa).

Residues 48–53, 74–75, 111–112, and 140–141 each bind NAD(+); these read GASSGY, FE, DA, and LA. Residue Y226 participates in substrate binding. Residue Y236 is the Proton donor of the active site. Residues K245 and 274 to 276 each bind NAD(+); that span reads VVT.

It belongs to the TER reductase family. In terms of assembly, monomer.

It catalyses the reaction a 2,3-saturated acyl-[ACP] + NAD(+) = a (2E)-enoyl-[ACP] + NADH + H(+). It functions in the pathway lipid metabolism; fatty acid biosynthesis. Functionally, involved in the final reduction of the elongation cycle of fatty acid synthesis (FAS II). Catalyzes the reduction of a carbon-carbon double bond in an enoyl moiety that is covalently linked to an acyl carrier protein (ACP). The polypeptide is Enoyl-[acyl-carrier-protein] reductase [NADH] (Xanthomonas oryzae pv. oryzae (strain PXO99A)).